Reading from the N-terminus, the 315-residue chain is Putative heme-binding peroxidase (315 aa).

The active-site Proton acceptor is the histidine 40. Histidine 169 lines the heme b pocket. Tryptophan 185 (tryptophan radical intermediate) is an active-site residue. The segment at 267–286 (EEGKPLDKTAPPAGDETCPV) is disordered.

The protein belongs to the peroxidase family. Cytochrome c peroxidase subfamily. Heme b is required as a cofactor.

In terms of biological role, destroys radicals which are normally produced within the cells and which are toxic to biological systems. The polypeptide is Putative heme-binding peroxidase (Cryptococcus neoformans var. neoformans serotype D (strain B-3501A) (Filobasidiella neoformans)).